Consider the following 635-residue polypeptide: Probable potassium transport system protein Kup (635 aa).

12 helical membrane passes run 20 to 40 (MALVIGAIGVVFGDIGTSPLY), 62 to 82 (VLSLAFWALMITVTLKYVTII), 111 to 131 (AYVVGILGIFGASLFFGDGVI), 149 to 169 (PSLHPFIVPITVVVLLVVFMV), 180 to 200 (VFGPITCLWFLSLGAIGIWNI), 223 to 243 (GWHGVFILGAVVLAVTGGEAL), 259 to 279 (WYFFVLPMLLLNYLGQGALVL), 292 to 312 (AVPSWALYPMIILATLAAVIA), 349 to 369 (IYVPGINWLLMVMVIALVLIF), 377 to 397 (VAYGISVSMTMLIDTLLLALV), 408 to 428 (WVLPLCVVFFIIELAFVIANG), and 429 to 449 (AKLLQGAWFPLALGIVVFTLM).

Belongs to the HAK/KUP transporter (TC 2.A.72) family.

The protein localises to the cell inner membrane. It carries out the reaction K(+)(in) + H(+)(in) = K(+)(out) + H(+)(out). Its function is as follows. Transport of potassium into the cell. Likely operates as a K(+):H(+) symporter. The polypeptide is Probable potassium transport system protein Kup (Xanthomonas campestris pv. campestris (strain 8004)).